The primary structure comprises 811 residues: MKLSTSGLGQQGHEGEKCLNSELWHACAGPLVSLPSSGSRVVYFPQGHSEQVAATTNKEVDGHIPNYPSLPPQLICQLHNVTMHADVETDEVYAQMTLQPLTPEEQKETFVPIELGIPSKQPSNYFCKTLTASDTSTHGGFSVPRRAAEKVFPPLDYTLQPPAQELIARDLHDVEWKFRHIFRGQPKRHLLTTGWSVFVSAKRLVAGDSVIFIRNEKNQLFLGIRHATRPQTIVPSSVLSSDSMHIGLLAAAAHASATNSCFTVFFHPRASQSEFVIQLSKYIKAVFHTRISVGMRFRMLFETEESSVRRYMGTITGISDLDSVRWPNSHWRSVKVGWDESTAGERQPRVSLWEIEPLTTFPMYPSLFPLRLKRPWHAGTSSLPDGRGDLGSGLTWLRGGGGEQQGLLPLNYPSVGLFPWMQQRLDLSQMGTDNNQQYQAMLAAGLQNIGGGDPLRQQFVQLQEPHHQYLQQSASHNSDLMLQQQQQQQASRHLMHAQTQIMSENLPQQNMRQEVSNQPAGQQQQLQQPDQNAYLNAFKMQNGHLQQWQQQSEMPSPSFMKSDFTDSSNKFATTASPASGDGNLLNFSITGQSVLPEQLTTEGWSPKASNTFSEPLSLPQAYPGKSLALEPGNPQNPSLFGVDPDSGLFLPSTVPRFASSSGDAEASPMSLTDSGFQNSLYSCMQDTTHELLHGAGQINSSNQTKNFVKVYKSGSVGRSLDISRFSSYHELREELGKMFAIEGLLEDPLRSGWQLVFVDKENDILLLGDDPWESFVNNVWYIKILSPEDVHQMGDHGEGSGGLFPQNPTHL.

The segment at residues 126–228 (FCKTLTASDT…QLFLGIRHAT (103 aa)) is a DNA-binding region (TF-B3). Disordered regions lie at residues 467-496 (HQYLQQSASHNSDLMLQQQQQQQASRHLMH) and 544-565 (HLQQWQQQSEMPSPSFMKSDFT). Composition is skewed to polar residues over residues 469–482 (YLQQSASHNSDLML) and 544–555 (HLQQWQQQSEMP). Positions 705-789 (KNFVKVYKSG…WYIKILSPED (85 aa)) constitute a PB1 domain.

This sequence belongs to the ARF family. In terms of assembly, homodimers and heterodimers. Expressed in the whole plant.

Its subcellular location is the nucleus. Auxin response factors (ARFs) are transcriptional factors that bind specifically to the DNA sequence 5'-TGTCTC-3' found in the auxin-responsive promoter elements (AuxREs). Seems to act as transcriptional activator. Formation of heterodimers with Aux/IAA proteins may alter their ability to modulate early auxin response genes expression. Regulates both stamen and gynoecium maturation. Promotes jasmonic acid production. Partially redundant with ARF6. Involved in fruit initiation. Acts as an inhibitor to stop further carpel development in the absence of fertilization and the generation of signals required to initiate fruit and seed development. This is Auxin response factor 8 (ARF8) from Arabidopsis thaliana (Mouse-ear cress).